Reading from the N-terminus, the 721-residue chain is 1,4-alpha-glucan branching enzyme GlgB (721 aa).

D400 acts as the Nucleophile in catalysis. E453 (proton donor) is an active-site residue.

Belongs to the glycosyl hydrolase 13 family. GlgB subfamily. In terms of assembly, monomer.

The catalysed reaction is Transfers a segment of a (1-&gt;4)-alpha-D-glucan chain to a primary hydroxy group in a similar glucan chain.. Its pathway is glycan biosynthesis; glycogen biosynthesis. In terms of biological role, catalyzes the formation of the alpha-1,6-glucosidic linkages in glycogen by scission of a 1,4-alpha-linked oligosaccharide from growing alpha-1,4-glucan chains and the subsequent attachment of the oligosaccharide to the alpha-1,6 position. This chain is 1,4-alpha-glucan branching enzyme GlgB, found in Chlamydia felis (strain Fe/C-56) (Chlamydophila felis).